We begin with the raw amino-acid sequence, 101 residues long: Protein S100-A7-like 2 (101 aa).

EF-hand domains lie at 13–48 (IVAM…SGCE) and 50–85 (SDMD…ITID). Asp63, Asn65, Asp67, Lys69, and Glu74 together coordinate Ca(2+). Zn(2+) contacts are provided by His87 and His91.

Belongs to the S-100 family.

The chain is Protein S100-A7-like 2 (S100A7L2) from Homo sapiens (Human).